We begin with the raw amino-acid sequence, 326 residues long: MGVSAEPRSLSVARAGLASPVIEKARSALLPSQDVEDTVETLMLHPVIKAFLCGSISGTCSTLLFQPLDLLKTRLQTLQPSDVGPRRVGMLSVFLKVVRTESLLGLWKGMSPSIVRCVPGVGIYFGTLYSSKQYFLRGHPPTALESVILGMGSRSVAGVCMSPITVVKTRYESGAYSYESVYAALRSIYCSEGSRGLFRGLTATLLRDAPFSGLYLMFYSQTRATVLHGADELDAALMPLVNFSCGVFAGILASLVTQPADVIKTHMQLSTVKCQCIGQVATLILKTHGLRGFFHGSVPRALRRTLMAAMAWTVYEEMMAKMGLKS.

Solcar repeat units follow at residues 45–134 (HPVI…SKQY), 141–225 (PTAL…TRAT), and 237–321 (LMPL…MMAK). The next 6 helical transmembrane spans lie at 51 to 76 (FLCG…TRLQ), 109 to 135 (GMSP…KQYF), 147 to 172 (VILG…TRYE), 200 to 223 (GLTA…SQTR), 241 to 267 (VNFS…KTHM), and 296 to 314 (GSVP…AWTV).

This sequence belongs to the mitochondrial carrier (TC 2.A.29) family. SLC25A38 subfamily.

It localises to the mitochondrion inner membrane. It carries out the reaction glycine(in) = glycine(out). Mitochondrial glycine transporter that imports glycine into the mitochondrial matrix. Plays an important role in providing glycine for the first enzymatic step in heme biosynthesis, the condensation of glycine with succinyl-CoA to produce 5-aminolevulinate (ALA) in the mitochondrial matrix. Required during erythropoiesis. Its function is as follows. Plays a role as pro-apoptotic protein that induces caspase-dependent apoptosis. This is Mitochondrial glycine transporter from Rattus norvegicus (Rat).